The primary structure comprises 292 residues: 33 kDa chaperonin (292 aa).

2 disulfides stabilise this stretch: cysteine 230–cysteine 232 and cysteine 263–cysteine 266.

Belongs to the HSP33 family. In terms of processing, under oxidizing conditions two disulfide bonds are formed involving the reactive cysteines. Under reducing conditions zinc is bound to the reactive cysteines and the protein is inactive.

The protein resides in the cytoplasm. In terms of biological role, redox regulated molecular chaperone. Protects both thermally unfolding and oxidatively damaged proteins from irreversible aggregation. Plays an important role in the bacterial defense system toward oxidative stress. This is 33 kDa chaperonin from Shigella boydii serotype 4 (strain Sb227).